The primary structure comprises 162 residues: MELKFLGEPCLTTVSEPVSEVDEQLRAFISGMFRVMRGAGGVGLAAPQVGRTVRVFVVDVEHHVRAFINPQITAASEEQSSYEEGCLSIPHIYERVLRPRRVSVQYLDENGKRCAVDADGILARVIQHEYDHLDGILFLDRIDEKRRDDALRRYAALRGTIR.

The Fe cation site is built by Cys-86 and His-128. Glu-129 is a catalytic residue. A Fe cation-binding site is contributed by His-132.

It belongs to the polypeptide deformylase family. Requires Fe(2+) as cofactor.

It carries out the reaction N-terminal N-formyl-L-methionyl-[peptide] + H2O = N-terminal L-methionyl-[peptide] + formate. Functionally, removes the formyl group from the N-terminal Met of newly synthesized proteins. Requires at least a dipeptide for an efficient rate of reaction. N-terminal L-methionine is a prerequisite for activity but the enzyme has broad specificity at other positions. The protein is Peptide deformylase of Treponema pallidum (strain Nichols).